The chain runs to 156 residues: Snaclec A10 (156 aa).

Residues 1-23 form the signal peptide; sequence MGRSISVSFGLLVVFLSLSGIGA. 3 cysteine pairs are disulfide-bonded: Cys-27–Cys-38, Cys-55–Cys-154, and Cys-129–Cys-146. Residues 34–155 enclose the C-type lectin domain; sequence YDQHCYQAVD…CGQPYRFTCE (122 aa).

The protein belongs to the snaclec family. As to quaternary structure, heterodimer; disulfide-linked. Expressed by the venom gland.

It is found in the secreted. Interferes with one step of hemostasis (modulation of platelet aggregation, or coagulation cascade, for example). In Macrovipera lebetinus (Levantine viper), this protein is Snaclec A10.